The primary structure comprises 468 residues: A-type ATP synthase subunit B (468 aa).

Belongs to the ATPase alpha/beta chains family. In terms of assembly, has multiple subunits with at least A(3), B(3), C, D, E, F, H, I and proteolipid K(x).

It localises to the cell membrane. Functionally, component of the A-type ATP synthase that produces ATP from ADP in the presence of a proton gradient across the membrane. The B chain is a regulatory subunit. The protein is A-type ATP synthase subunit B of Haloferax volcanii (strain ATCC 29605 / DSM 3757 / JCM 8879 / NBRC 14742 / NCIMB 2012 / VKM B-1768 / DS2) (Halobacterium volcanii).